We begin with the raw amino-acid sequence, 225 residues long: Glucosyl-3-phosphoglycerate phosphatase (225 aa).

Arginine 10 is a substrate binding site. Histidine 11 acts as the Tele-phosphohistidine intermediate in catalysis. Position 60 (arginine 60) interacts with substrate. Glutamate 84 (proton donor/acceptor) is an active-site residue. Histidine 158 provides a ligand contact to substrate.

Belongs to the phosphoglycerate mutase family. Homodimer.

The enzyme catalyses (2R)-2-O-(alpha-D-glucopyranosyl)-3-phospho-glycerate + H2O = (2R)-2-O-(alpha-D-glucopyranosyl)-glycerate + phosphate. Functionally, involved in the biosynthesis of mycobacterial methylglucose lipopolysaccharides (MGLP). Catalyzes the dephosphorylation of glucosyl-3-phosphoglycerate (GPG) to glucosylglycerate. This chain is Glucosyl-3-phosphoglycerate phosphatase, found in Mycolicibacterium vanbaalenii (strain DSM 7251 / JCM 13017 / BCRC 16820 / KCTC 9966 / NRRL B-24157 / PYR-1) (Mycobacterium vanbaalenii).